The primary structure comprises 412 residues: Probable beta-1,4-xylosyltransferase IRX10 (412 aa).

Residues 1 to 21 (MKIHSCLSAILLFLFFSASSA) form a helical; Signal-anchor for type II membrane protein membrane-spanning segment. The Lumenal portion of the chain corresponds to 22-412 (KQNVRTERIS…AGPVADLKPW (391 aa)). Asn-139 and Asn-400 each carry an N-linked (GlcNAc...) asparagine glycan.

The protein belongs to the glycosyltransferase 47 family. As to expression, limited to xylem cells. Expressed in the root tip, xylem cells of roots, and in the vasculature of roots, cotyledons and leaves.

It is found in the golgi apparatus membrane. Its function is as follows. Involved in the synthesis of the hemicellulose glucuronoxylan, a major component of secondary cell walls. Probably involved in the elongation of glucuronoxylan xylosyl backbone, especially in the formation of GlcUA side chain of xylans. The sequence is that of Probable beta-1,4-xylosyltransferase IRX10 (IRX10) from Arabidopsis thaliana (Mouse-ear cress).